A 511-amino-acid polypeptide reads, in one-letter code: Cobyric acid synthase (511 aa).

One can recognise a GATase cobBQ-type domain in the interval 251 to 443 (LLDIAIICLP…IHGIFDNDVF (193 aa)). Cys332 (nucleophile) is an active-site residue. The active site involves His435.

Belongs to the CobB/CobQ family. CobQ subfamily.

The protein operates within cofactor biosynthesis; adenosylcobalamin biosynthesis. Functionally, catalyzes amidations at positions B, D, E, and G on adenosylcobyrinic A,C-diamide. NH(2) groups are provided by glutamine, and one molecule of ATP is hydrogenolyzed for each amidation. The sequence is that of Cobyric acid synthase from Listeria monocytogenes serotype 4b (strain CLIP80459).